The following is a 1213-amino-acid chain: DNA-directed RNA polymerase subunit beta' (1213 aa).

Residues cysteine 60, cysteine 62, cysteine 75, and cysteine 78 each coordinate Zn(2+). Positions 450, 452, and 454 each coordinate Mg(2+). Zn(2+)-binding residues include cysteine 819, cysteine 893, cysteine 900, and cysteine 903.

It belongs to the RNA polymerase beta' chain family. The RNAP catalytic core consists of 2 alpha, 1 beta, 1 beta' and 1 omega subunit. When a sigma factor is associated with the core the holoenzyme is formed, which can initiate transcription. It depends on Mg(2+) as a cofactor. Zn(2+) serves as cofactor.

The catalysed reaction is RNA(n) + a ribonucleoside 5'-triphosphate = RNA(n+1) + diphosphate. Functionally, DNA-dependent RNA polymerase catalyzes the transcription of DNA into RNA using the four ribonucleoside triphosphates as substrates. This Streptococcus pyogenes serotype M18 (strain MGAS8232) protein is DNA-directed RNA polymerase subunit beta'.